The primary structure comprises 428 residues: Lipoamide acyltransferase component of branched-chain alpha-keto acid dehydrogenase complex (428 aa).

The region spanning 3–78 (THVIKMPDIG…AVGGELIRLE (76 aa)) is the Lipoyl-binding domain. Lys44 is subject to N6-lipoyllysine. Residues 88–145 (SPAAATPAAPVAATPEKPKEAPVAAPKAAAEAPRALRDSEAPRQRRQPGERPLASPAV) are disordered. Residues 89–120 (PAAATPAAPVAATPEKPKEAPVAAPKAAAEAP) show a composition bias toward low complexity. Residues 121-136 (RALRDSEAPRQRRQPG) are compositionally biased toward basic and acidic residues. Residues 140-177 (LASPAVRQRARDLGIELQFVQGSGPAGRVLHEDLDAYL) enclose the Peripheral subunit-binding (PSBD) domain. Catalysis depends on residues His400 and Asp404.

Belongs to the 2-oxoacid dehydrogenase family. In terms of assembly, forms a 24-polypeptide structural core with octahedral symmetry. (R)-lipoate is required as a cofactor.

It catalyses the reaction N(6)-[(R)-dihydrolipoyl]-L-lysyl-[protein] + 2-methylpropanoyl-CoA = N(6)-[(R)-S(8)-2-methylpropanoyldihydrolipoyl]-L-lysyl-[protein] + CoA. Its function is as follows. The branched-chain alpha-keto dehydrogenase complex catalyzes the overall conversion of alpha-keto acids to acyl-CoA and CO(2). It contains multiple copies of three enzymatic components: branched-chain alpha-keto acid decarboxylase (E1), lipoamide acyltransferase (E2) and lipoamide dehydrogenase (E3). The chain is Lipoamide acyltransferase component of branched-chain alpha-keto acid dehydrogenase complex (bkdB) from Pseudomonas aeruginosa (strain ATCC 15692 / DSM 22644 / CIP 104116 / JCM 14847 / LMG 12228 / 1C / PRS 101 / PAO1).